A 245-amino-acid polypeptide reads, in one-letter code: Demethylmenaquinone methyltransferase (245 aa).

S-adenosyl-L-methionine-binding positions include Thr-70, Asp-90, and 118–119 (DC).

The protein belongs to the class I-like SAM-binding methyltransferase superfamily. MenG/UbiE family.

It carries out the reaction a 2-demethylmenaquinol + S-adenosyl-L-methionine = a menaquinol + S-adenosyl-L-homocysteine + H(+). It participates in quinol/quinone metabolism; menaquinone biosynthesis; menaquinol from 1,4-dihydroxy-2-naphthoate: step 2/2. Its function is as follows. Methyltransferase required for the conversion of demethylmenaquinol (DMKH2) to menaquinol (MKH2). The sequence is that of Demethylmenaquinone methyltransferase from Bacteroides fragilis (strain ATCC 25285 / DSM 2151 / CCUG 4856 / JCM 11019 / LMG 10263 / NCTC 9343 / Onslow / VPI 2553 / EN-2).